Here is a 110-residue protein sequence, read N- to C-terminus: Protein RnfH (110 aa).

The disordered stretch occupies residues 86–110 (RKRAAQQAKDQEEKKKAEKSANKEN). Positions 94 to 110 (KDQEEKKKAEKSANKEN) are enriched in basic and acidic residues.

It belongs to the UPF0125 (RnfH) family.

The protein is Protein RnfH of Mannheimia succiniciproducens (strain KCTC 0769BP / MBEL55E).